The sequence spans 114 residues: Large ribosomal subunit protein bL20 (114 aa).

Belongs to the bacterial ribosomal protein bL20 family.

In terms of biological role, binds directly to 23S ribosomal RNA and is necessary for the in vitro assembly process of the 50S ribosomal subunit. It is not involved in the protein synthesizing functions of that subunit. This Anaeromyxobacter sp. (strain Fw109-5) protein is Large ribosomal subunit protein bL20.